The sequence spans 177 residues: MSRVGKRPVAVPSGVTATVDGQTVKMKGPKGQLQFVVHDDVEVKLESGQIKVKPRLETNRARALYGTARAQVANLVEGVTKGFEKKLEITGVGYRAAMQGKNLQLALGYSHDVIYTIPEGITITVPKPTEITVTGSDIQRVGQVAAEIRSYRPPEPYKGKGVKYVGEFIFRKEGKKK.

Belongs to the universal ribosomal protein uL6 family. Part of the 50S ribosomal subunit.

Functionally, this protein binds to the 23S rRNA, and is important in its secondary structure. It is located near the subunit interface in the base of the L7/L12 stalk, and near the tRNA binding site of the peptidyltransferase center. The chain is Large ribosomal subunit protein uL6 from Bradyrhizobium diazoefficiens (strain JCM 10833 / BCRC 13528 / IAM 13628 / NBRC 14792 / USDA 110).